The primary structure comprises 620 residues: Cilia- and flagella-associated protein 52 (620 aa).

WD repeat units lie at residues 62–106 (GHGN…LLAR), 109–150 (LHKG…AICG), 156–195 (LNVG…RKIW), 288–327 (QLQG…ETLI), 330–369 (CHFD…ELLR), 372–411 (VPNM…LMYV), 415–454 (AHRI…QKLE), 459–498 (EHKS…RNQM), 500–539 (LANT…VIRE), 543–582 (SLSG…VTHV), and 585–620 (GHSG…PYTS).

This sequence belongs to the CFAP52 family. As to quaternary structure, microtubule inner protein component of sperm flagellar doublet microtubules. Interacts with BRCA2. Interacts with the CCT chaperonin complex. Interacts with HSP70. Interacts with AK8. Interacts with CFAP45. Interacts with DNAI1. Interacts with IQDC. As to expression, expressed in respiratory cells and sperm (at protein level). Highly expressed in testis. Up-regulated in hepatocellular carcinoma (HCC).

Its subcellular location is the cytoplasm. The protein resides in the cytoskeleton. The protein localises to the cilium axoneme. It is found in the flagellum axoneme. Microtubule inner protein (MIP) part of the dynein-decorated doublet microtubules (DMTs) in cilia axoneme. Important for proper ciliary and flagellar beating. May act in cooperation with CFAP45 and axonemal dynein subunit DNAH11. May play a role in cell growth and/or survival. This is Cilia- and flagella-associated protein 52 from Homo sapiens (Human).